The primary structure comprises 420 residues: Serine hydroxymethyltransferase (420 aa).

(6S)-5,6,7,8-tetrahydrofolate-binding positions include Leu-121 and 125 to 127 (GHL). The residue at position 230 (Lys-230) is an N6-(pyridoxal phosphate)lysine. Residue 354–356 (SPF) coordinates (6S)-5,6,7,8-tetrahydrofolate.

It belongs to the SHMT family. As to quaternary structure, homodimer. The cofactor is pyridoxal 5'-phosphate.

It localises to the cytoplasm. The catalysed reaction is (6R)-5,10-methylene-5,6,7,8-tetrahydrofolate + glycine + H2O = (6S)-5,6,7,8-tetrahydrofolate + L-serine. It participates in one-carbon metabolism; tetrahydrofolate interconversion. Its pathway is amino-acid biosynthesis; glycine biosynthesis; glycine from L-serine: step 1/1. Functionally, catalyzes the reversible interconversion of serine and glycine with tetrahydrofolate (THF) serving as the one-carbon carrier. This reaction serves as the major source of one-carbon groups required for the biosynthesis of purines, thymidylate, methionine, and other important biomolecules. Also exhibits THF-independent aldolase activity toward beta-hydroxyamino acids, producing glycine and aldehydes, via a retro-aldol mechanism. In Rickettsia africae (strain ESF-5), this protein is Serine hydroxymethyltransferase.